The sequence spans 236 residues: Biosynthetic peptidoglycan transglycosylase (236 aa).

A helical transmembrane segment spans residues 12–31; sequence ALLWFVAGSIVLVLVFRWVP.

It belongs to the glycosyltransferase 51 family.

It is found in the cell inner membrane. It carries out the reaction [GlcNAc-(1-&gt;4)-Mur2Ac(oyl-L-Ala-gamma-D-Glu-L-Lys-D-Ala-D-Ala)](n)-di-trans,octa-cis-undecaprenyl diphosphate + beta-D-GlcNAc-(1-&gt;4)-Mur2Ac(oyl-L-Ala-gamma-D-Glu-L-Lys-D-Ala-D-Ala)-di-trans,octa-cis-undecaprenyl diphosphate = [GlcNAc-(1-&gt;4)-Mur2Ac(oyl-L-Ala-gamma-D-Glu-L-Lys-D-Ala-D-Ala)](n+1)-di-trans,octa-cis-undecaprenyl diphosphate + di-trans,octa-cis-undecaprenyl diphosphate + H(+). It functions in the pathway cell wall biogenesis; peptidoglycan biosynthesis. In terms of biological role, peptidoglycan polymerase that catalyzes glycan chain elongation from lipid-linked precursors. This Pseudomonas putida (strain ATCC 47054 / DSM 6125 / CFBP 8728 / NCIMB 11950 / KT2440) protein is Biosynthetic peptidoglycan transglycosylase.